The primary structure comprises 398 residues: Phosphoglycerate kinase (398 aa).

Residues Asp-23–Asn-25, Arg-38, His-61–Lys-64, Arg-122, and Arg-155 contribute to the substrate site. ATP is bound by residues Lys-206, Gly-297, Glu-328, and Gly-354–Ser-357.

The protein belongs to the phosphoglycerate kinase family. As to quaternary structure, monomer.

The protein resides in the cytoplasm. It catalyses the reaction (2R)-3-phosphoglycerate + ATP = (2R)-3-phospho-glyceroyl phosphate + ADP. Its pathway is carbohydrate degradation; glycolysis; pyruvate from D-glyceraldehyde 3-phosphate: step 2/5. The chain is Phosphoglycerate kinase from Clostridium botulinum (strain Hall / ATCC 3502 / NCTC 13319 / Type A).